Consider the following 399-residue polypeptide: Stearoyl-[acyl-carrier-protein] 9-desaturase, seed specific, chloroplastic (399 aa).

Residues 1–34 constitute a chloroplast transit peptide; it reads MALKFNPLVSQPYKLASSARPPVSTFRSPKFLCL. Fe cation-binding residues include Glu141, Glu179, His182, Glu232, Glu265, and His268.

Belongs to the fatty acid desaturase type 2 family. In terms of assembly, homodimer. Fe(2+) is required as a cofactor. Developing seeds.

The protein localises to the plastid. It is found in the chloroplast. The catalysed reaction is octadecanoyl-[ACP] + 2 reduced [2Fe-2S]-[ferredoxin] + O2 + 2 H(+) = (9Z)-octadecenoyl-[ACP] + 2 oxidized [2Fe-2S]-[ferredoxin] + 2 H2O. The protein operates within lipid metabolism; fatty acid metabolism. Converts stearoyl-ACP to oleoyl-ACP by introduction of a cis double bond between carbons Delta(9) and Delta(10) of the acyl chain. The sequence is that of Stearoyl-[acyl-carrier-protein] 9-desaturase, seed specific, chloroplastic from Brassica napus (Rape).